Consider the following 719-residue polypeptide: Ferric reductase transmembrane component 4 (719 aa).

The N-terminal stretch at 1–18 is a signal peptide; sequence MLLVHIISFLLFFQLSAA. The Extracellular portion of the chain corresponds to 19–156; sequence KAPPSKTSLI…YGYYYNHDIP (138 aa). N-linked (GlcNAc...) asparagine glycans are attached at residues N51, N80, N101, N113, N127, and N135. Residues 157–177 traverse the membrane as a helical segment; the sequence is YYFGGIICAYFVGVMLLAGLI. Topologically, residues 178–228 are cytoplasmic; that stretch reads RFLNYTPIKKIMFQQKLVNYVRGYTTLPTLYEKHAEPFSYLKVITGYLPTR. Residues 229 to 249 traverse the membrane as a helical segment; sequence FETLVILGYLILHTIFMAYKY. Residues 250 to 267 are Extracellular-facing; the sequence is QYDPYHIIFAAHRAEVAH. Residues 268–288 form a helical membrane-spanning segment; it reads FVAYRSGILSFAHLPLIVLFA. The 135-residue stretch at 273-407 folds into the Ferric oxidoreductase domain; sequence SGILSFAHLP…SGIEWIYAAI (135 aa). The Cytoplasmic portion of the chain corresponds to 289–304; that stretch reads GRNNFLQLISGLKHTS. The helical transmembrane segment at 305 to 325 threads the bilayer; sequence FIVFHKWLGRMMFLDAIIHAA. Heme is bound by residues H309 and H323. Over 326 to 346 the chain is Extracellular; the sequence is GFTNYYLYYKKWNTVRLRVYW. Residues 347-367 traverse the membrane as a helical segment; that stretch reads KFGIATTCLAGMLIFFSIAAF. The Cytoplasmic segment spans residues 368 to 373; sequence RRHYYE. Residues 374-394 traverse the membrane as a helical segment; the sequence is TFMALHIVFAALFLYTCWEHV. The heme site is built by H379 and H393. Residue T395 is a topological domain, extracellular. A helical transmembrane segment spans residues 396–416; the sequence is NFSGIEWIYAAIAIWGVDRIV. The FAD-binding FR-type domain occupies 408–527; that stretch reads AIWGVDRIVR…EGPYGSKSTA (120 aa). Topologically, residues 417–719 are cytoplasmic; that stretch reads RITRIALLGF…IEYLEEYQAW (303 aa). 472–478 contacts FAD; that stretch reads HPFTVMD. 519–522 contacts NADP(+); it reads GPYG. Composition is skewed to polar residues over residues 606–618 and 625–643; these read EKIS…NGET and SSLS…TELP. Residues 606–643 are disordered; it reads EKISSNEVKNGETTAEKAPSSLSNSEKAPSESENTELP. NADP(+) is bound at residue 685–686; it reads CG.

The protein belongs to the ferric reductase (FRE) family. The cofactor is FAD.

It localises to the cell membrane. It carries out the reaction 2 a Fe(II)-siderophore + NADP(+) + H(+) = 2 a Fe(III)-siderophore + NADPH. Siderophore-iron reductase responsible for reducing extracellular iron prior to import. Catalyzes the reductive uptake of Fe(3+) bound to dihydroxamate rhodotorulic acid. Fe(3+) is reduced to Fe(2+), which then dissociates from the siderophore and can be imported by the high-affinity Fe(2+) transport complex in the plasma membrane. The sequence is that of Ferric reductase transmembrane component 4 (FRE4) from Saccharomyces cerevisiae (strain ATCC 204508 / S288c) (Baker's yeast).